A 550-amino-acid chain; its full sequence is MTIYPNLKKIMTKTQSTDFFIACKESRIENNTNFYGCFYLGPFDESLSQTLANDLRRTLLSELTGLAITSIEIEGVLHKFSTLTGMKEPVLDLICNLQNIVLRKETISSTNMNYRATKKTYIGFLSVNGPRVIKAADLKLPAGLQCVDPNQYIATLAEDGFLNMKFNINEGKNYIKQKPYNLDVTTLKKRNILLQNFKNKIGLTALKNKQLMSTTMEGKPLLSNSDNLRFKKSFKRMLTSPNQSLKNKTSLGHDTVSNPIPLDAVFMPVTKINCIIEENNVYSDFSTDPSLEFSTHLVPSLTTQTNLRQESTHKFVNKANSLLQENNLFRSEKVYLPNIYIPEGEGDALSLKGVSPYSDFKTFLSTLNYNSLYQTSLFLNQSLGQNKLLPWQANTLFFDVTNFADSQSNDVNMNMDLAGDKTSVQKIHSTGISNTDAQLNKLSLTKIKSFLGSSDKLQNKTYQSFLQPKYASSNLRTLLTQRSLQKNQSVFMHSFLDDQAKHKELTSNTLRANKFQVMKTVVSIPPKTFKTNPINTFHNQSLTFEYARKF.

The tract at residues methionine 1–lysine 333 is alpha N-terminal domain (alpha-NTD). The tract at residues threonine 185–asparagine 258 is insert. Positions phenylalanine 378–phenylalanine 550 are alpha C-terminal domain (alpha-CTD).

The protein belongs to the RNA polymerase alpha chain family. In terms of assembly, in plastids the minimal PEP RNA polymerase catalytic core is composed of four subunits: alpha, beta, beta', and beta''. When a (nuclear-encoded) sigma factor is associated with the core the holoenzyme is formed, which can initiate transcription.

Its subcellular location is the plastid. The protein resides in the chloroplast. It catalyses the reaction RNA(n) + a ribonucleoside 5'-triphosphate = RNA(n+1) + diphosphate. Functionally, DNA-dependent RNA polymerase catalyzes the transcription of DNA into RNA using the four ribonucleoside triphosphates as substrates. In Chlamydomonas reinhardtii (Chlamydomonas smithii), this protein is DNA-directed RNA polymerase subunit alpha (rpoA).